Consider the following 185-residue polypeptide: MKLIVGLGNPGAKYDGTRHNVGFDVVDAVARRLNIEIKQSKANGLYGEGRIDGEKIFLLKPQTFMNRSGESVRPFLEYYNMEVEDLLVIYDDLDLPVGKIRLRQKGSAGGHNGMKSLIAHLGTSDFKRIRVGVDRPAPGETVVQHVLGRYRPEEKDAISEAIDLSAEAAEAFTKKPFLEVMNTFN.

Tyr14 serves as a coordination point for tRNA. Catalysis depends on His19, which acts as the Proton acceptor. TRNA is bound by residues Phe64, Asn66, and Asn112.

Belongs to the PTH family. As to quaternary structure, monomer.

The protein resides in the cytoplasm. It catalyses the reaction an N-acyl-L-alpha-aminoacyl-tRNA + H2O = an N-acyl-L-amino acid + a tRNA + H(+). Its function is as follows. Hydrolyzes ribosome-free peptidyl-tRNAs (with 1 or more amino acids incorporated), which drop off the ribosome during protein synthesis, or as a result of ribosome stalling. Catalyzes the release of premature peptidyl moieties from peptidyl-tRNA molecules trapped in stalled 50S ribosomal subunits, and thus maintains levels of free tRNAs and 50S ribosomes. In Halalkalibacterium halodurans (strain ATCC BAA-125 / DSM 18197 / FERM 7344 / JCM 9153 / C-125) (Bacillus halodurans), this protein is Peptidyl-tRNA hydrolase.